We begin with the raw amino-acid sequence, 362 residues long: Phospho-N-acetylmuramoyl-pentapeptide-transferase (362 aa).

The next 10 membrane-spanning stretches (helical) occupy residues 28 to 48, 75 to 95, 100 to 120, 134 to 154, 170 to 190, 201 to 221, 241 to 261, 265 to 285, 290 to 310, and 339 to 359; these read GAVLTALIVAFLVGPRIIAWL, TMGGFMILLALSVSTLLWADL, VWIVLLVTLGYGLIGFWDDYL, AKLVAEIAIALAAAAWVWSLQ, VLLQLSWFYLPFAVFIIVGAG, GLAIVPVMIASGVFAIFSYLV, LAVFCGALVGAGLGFLWFNAP, VFMGDTGSLALGGALGAISVV, LVLGIVGGLFVLETVSVIVQV, and TVVIRFWIIATILALAGLATL.

The protein belongs to the glycosyltransferase 4 family. MraY subfamily. It depends on Mg(2+) as a cofactor.

It localises to the cell inner membrane. It catalyses the reaction UDP-N-acetyl-alpha-D-muramoyl-L-alanyl-gamma-D-glutamyl-meso-2,6-diaminopimeloyl-D-alanyl-D-alanine + di-trans,octa-cis-undecaprenyl phosphate = di-trans,octa-cis-undecaprenyl diphospho-N-acetyl-alpha-D-muramoyl-L-alanyl-D-glutamyl-meso-2,6-diaminopimeloyl-D-alanyl-D-alanine + UMP. The protein operates within cell wall biogenesis; peptidoglycan biosynthesis. Functionally, catalyzes the initial step of the lipid cycle reactions in the biosynthesis of the cell wall peptidoglycan: transfers peptidoglycan precursor phospho-MurNAc-pentapeptide from UDP-MurNAc-pentapeptide onto the lipid carrier undecaprenyl phosphate, yielding undecaprenyl-pyrophosphoryl-MurNAc-pentapeptide, known as lipid I. This is Phospho-N-acetylmuramoyl-pentapeptide-transferase from Paramagnetospirillum magneticum (strain ATCC 700264 / AMB-1) (Magnetospirillum magneticum).